The chain runs to 270 residues: Regulatory protein RecX (270 aa).

It belongs to the RecX family.

It localises to the cytoplasm. Functionally, modulates RecA activity. In Bacillus cereus (strain AH187), this protein is Regulatory protein RecX.